We begin with the raw amino-acid sequence, 78 residues long: Small ribosomal subunit protein uS17 (78 aa).

Belongs to the universal ribosomal protein uS17 family. Part of the 30S ribosomal subunit.

In terms of biological role, one of the primary rRNA binding proteins, it binds specifically to the 5'-end of 16S ribosomal RNA. In Wolbachia pipientis wMel, this protein is Small ribosomal subunit protein uS17.